The sequence spans 110 residues: Large ribosomal subunit protein uL22 (110 aa).

The protein belongs to the universal ribosomal protein uL22 family. Part of the 50S ribosomal subunit.

This protein binds specifically to 23S rRNA; its binding is stimulated by other ribosomal proteins, e.g. L4, L17, and L20. It is important during the early stages of 50S assembly. It makes multiple contacts with different domains of the 23S rRNA in the assembled 50S subunit and ribosome. In terms of biological role, the globular domain of the protein is located near the polypeptide exit tunnel on the outside of the subunit, while an extended beta-hairpin is found that lines the wall of the exit tunnel in the center of the 70S ribosome. The polypeptide is Large ribosomal subunit protein uL22 (Exiguobacterium sibiricum (strain DSM 17290 / CCUG 55495 / CIP 109462 / JCM 13490 / 255-15)).